The sequence spans 83 residues: Small ribosomal subunit protein bS18 (83 aa).

The protein belongs to the bacterial ribosomal protein bS18 family. As to quaternary structure, part of the 30S ribosomal subunit. Forms a tight heterodimer with protein bS6.

Functionally, binds as a heterodimer with protein bS6 to the central domain of the 16S rRNA, where it helps stabilize the platform of the 30S subunit. The sequence is that of Small ribosomal subunit protein bS18 from Cytophaga hutchinsonii (strain ATCC 33406 / DSM 1761 / CIP 103989 / NBRC 15051 / NCIMB 9469 / D465).